A 338-amino-acid polypeptide reads, in one-letter code: MLQKPKSVKLRALRSPRKFGVAGRSCQEVLRKGCLRFQLPERGSRLCLYEDGTELTEDYFPSVPDNAELVLLTLGQAWQGYVSDIRRFLSAFHEPQVGLIQAAQQLLCDEQAPQRQRLLADLLHNVSQNIAAETRAEDPPWFEGLESRFQSKSGYLRYSCESRIRSYLREVSSYPSTVGAEAQEEFLRVLGSMCQRLRSMQYNGSYFDRGAKGGSRLCTPEGWFSCQGPFDMDSCLSRHSINPYSNRESRILFSTWNLDHIIEKKRTIIPTLVEAIKEQDGREVDWEYFYGLLFTSENLKLVHIVCHKKTTHKLNCDPSRIYKPQTRLKRKQPVRKRQ.

Positions 4–80 (KPKSVKLRAL…LLTLGQAWQG (77 aa)) constitute a CIDE-N domain.

Heterodimer of DFFA and DFFB. Interacts with H1-1.

It is found in the cytoplasm. Its subcellular location is the nucleus. Its activity is regulated as follows. Inhibited by DFFA (DFF45). Functionally, nuclease that induces DNA fragmentation and chromatin condensation during apoptosis. Degrades naked DNA and induces apoptotic morphology. The chain is DNA fragmentation factor subunit beta (DFFB) from Homo sapiens (Human).